Reading from the N-terminus, the 427-residue chain is Chaperone SurA (427 aa).

The N-terminal stretch at 1 to 13 is a signal peptide; that stretch reads MLGVALLSGAVHA. PpiC domains follow at residues 164-265 and 275-374; these read SEEY…KLEE and RDEV…EVLG.

Its subcellular location is the periplasm. It carries out the reaction [protein]-peptidylproline (omega=180) = [protein]-peptidylproline (omega=0). Functionally, chaperone involved in the correct folding and assembly of outer membrane proteins. Recognizes specific patterns of aromatic residues and the orientation of their side chains, which are found more frequently in integral outer membrane proteins. May act in both early periplasmic and late outer membrane-associated steps of protein maturation. The sequence is that of Chaperone SurA from Pseudomonas putida (strain ATCC 47054 / DSM 6125 / CFBP 8728 / NCIMB 11950 / KT2440).